Here is a 346-residue protein sequence, read N- to C-terminus: Golgi to ER traffic protein 4 (346 aa).

Residues 317 to 346 (GQNQGGSRRTPQGRSQSKTVEAPPASMELD) are disordered. The span at 321–335 (GGSRRTPQGRSQSKT) shows a compositional bias: polar residues.

The protein belongs to the GET4 family. In terms of assembly, component of the get4/get5/sgt2 sorting complex.

The protein resides in the cytoplasm. Its function is as follows. Component of the get4/get5/sgt2 sorting complex involved in the GET (guided entry of TA proteins) pathway that leads to the insertion of tail-anchored (TA) proteins into the endoplasmic reticulum. Get4 and get5 form an obligate complex that catalyzes the transfer of tail-anchored proteins destined to the endoplasmic reticulum from sgt2 to the cytosolic targeting factor which then targets the TA protein to the ER membrane via get1/get2. This chain is Golgi to ER traffic protein 4, found in Aspergillus fumigatus (strain ATCC MYA-4609 / CBS 101355 / FGSC A1100 / Af293) (Neosartorya fumigata).